The following is a 349-amino-acid chain: Flap endonuclease 1 (349 aa).

Residues 1-98 (MDLADLVKDV…EELERRRKAK (98 aa)) form an N-domain region. Residues Asp-27, Asp-80, Glu-152, Glu-154, Asp-173, Asp-175, and Asp-236 each contribute to the Mg(2+) site. Residues 116–258 (ELRKYSQAIL…RALKIIKKYG (143 aa)) are I-domain. The tract at residues 341–349 (RQTGLDRWF) is interaction with PCNA.

This sequence belongs to the XPG/RAD2 endonuclease family. FEN1 subfamily. As to quaternary structure, interacts with PCNA via subunit PCNA1. Requires Mg(2+) as cofactor.

Its activity is regulated as follows. Heterotrimeric PCNA stimulates the nuclease activity without altering cleavage specificity. Its function is as follows. Structure-specific nuclease with 5'-flap endonuclease and 5'-3' exonuclease activities involved in DNA replication and repair. During DNA replication, cleaves the 5'-overhanging flap structure that is generated by displacement synthesis when DNA polymerase encounters the 5'-end of a downstream Okazaki fragment. Binds the unpaired 3'-DNA end and kinks the DNA to facilitate 5' cleavage specificity. Cleaves one nucleotide into the double-stranded DNA from the junction in flap DNA, leaving a nick for ligation. Also involved in the base excision repair (BER) pathway. Acts as a genome stabilization factor that prevents flaps from equilibrating into structures that lead to duplications and deletions. Also possesses 5'-3' exonuclease activity on nicked or gapped double-stranded DNA. DNA polymerase I, DNA ligase and the flap endonuclease may be constitutively associated with the PCNA heterotrimer forming a scanning complex able to couple DNA synthesis and Okazaki fragment maturation. This Saccharolobus solfataricus (strain ATCC 35092 / DSM 1617 / JCM 11322 / P2) (Sulfolobus solfataricus) protein is Flap endonuclease 1.